The following is a 560-amino-acid chain: DNA ligase B (560 aa).

K124 functions as the N6-AMP-lysine intermediate in the catalytic mechanism.

This sequence belongs to the NAD-dependent DNA ligase family. LigB subfamily.

It catalyses the reaction NAD(+) + (deoxyribonucleotide)n-3'-hydroxyl + 5'-phospho-(deoxyribonucleotide)m = (deoxyribonucleotide)n+m + AMP + beta-nicotinamide D-nucleotide.. Catalyzes the formation of phosphodiester linkages between 5'-phosphoryl and 3'-hydroxyl groups in double-stranded DNA using NAD as a coenzyme and as the energy source for the reaction. This chain is DNA ligase B, found in Escherichia coli (strain ATCC 8739 / DSM 1576 / NBRC 3972 / NCIMB 8545 / WDCM 00012 / Crooks).